The following is a 1423-amino-acid chain: DNA-directed RNA polymerase, mitochondrial (1423 aa).

The N-terminal 73 residues, 1–73 (MLPRTASATR…RATVGFERHL (73 aa)), are a transit peptide targeting the mitochondrion. The disordered stretch occupies residues 266–303 (NMPDNVDPDTFAQQQQQQQQQQQQQQEQQQQQDTSIDQ). The segment covering 278 to 297 (QQQQQQQQQQQQQQEQQQQQ) has biased composition (low complexity). Active-site residues include aspartate 901 and lysine 970. Residues 1055–1064 (EFERSERSPH) are compositionally biased toward basic and acidic residues. A disordered region spans residues 1055–1087 (EFERSERSPHGDGTASGENITLAGNPRKSSAHK). Aspartate 1180 is a catalytic residue. The segment at 1316 to 1342 (VRRGREMDEEGEVDGSEEAVEHEDGMH) is disordered. Positions 1322-1336 (MDEEGEVDGSEEAVE) are enriched in acidic residues.

The protein belongs to the phage and mitochondrial RNA polymerase family.

Its subcellular location is the mitochondrion. The catalysed reaction is RNA(n) + a ribonucleoside 5'-triphosphate = RNA(n+1) + diphosphate. Its function is as follows. DNA-dependent RNA polymerase catalyzes the transcription of DNA into RNA using the four ribonucleoside triphosphates as substrates. In Neurospora crassa (strain ATCC 24698 / 74-OR23-1A / CBS 708.71 / DSM 1257 / FGSC 987), this protein is DNA-directed RNA polymerase, mitochondrial (cyt-5).